Reading from the N-terminus, the 433-residue chain is Ribosomal RNA small subunit methyltransferase B (433 aa).

S-adenosyl-L-methionine contacts are provided by residues cysteine 254–lysine 260, aspartate 277, aspartate 303, and aspartate 322. Cysteine 375 (nucleophile) is an active-site residue.

Belongs to the class I-like SAM-binding methyltransferase superfamily. RsmB/NOP family.

It localises to the cytoplasm. The catalysed reaction is cytidine(967) in 16S rRNA + S-adenosyl-L-methionine = 5-methylcytidine(967) in 16S rRNA + S-adenosyl-L-homocysteine + H(+). Its function is as follows. Specifically methylates the cytosine at position 967 (m5C967) of 16S rRNA. This chain is Ribosomal RNA small subunit methyltransferase B, found in Sodalis glossinidius (strain morsitans).